The chain runs to 308 residues: Aspartate carbamoyltransferase catalytic subunit (308 aa).

Residues Arg55 and Thr56 each contribute to the carbamoyl phosphate site. An L-aspartate-binding site is contributed by Lys83. Carbamoyl phosphate is bound by residues Arg105, His133, and Gln136. The L-aspartate site is built by Arg166 and Arg220. Carbamoyl phosphate-binding residues include Gly261 and Pro262.

The protein belongs to the aspartate/ornithine carbamoyltransferase superfamily. ATCase family. Heterododecamer (2C3:3R2) of six catalytic PyrB chains organized as two trimers (C3), and six regulatory PyrI chains organized as three dimers (R2).

The catalysed reaction is carbamoyl phosphate + L-aspartate = N-carbamoyl-L-aspartate + phosphate + H(+). Its pathway is pyrimidine metabolism; UMP biosynthesis via de novo pathway; (S)-dihydroorotate from bicarbonate: step 2/3. Functionally, catalyzes the condensation of carbamoyl phosphate and aspartate to form carbamoyl aspartate and inorganic phosphate, the committed step in the de novo pyrimidine nucleotide biosynthesis pathway. The chain is Aspartate carbamoyltransferase catalytic subunit from Chlorobaculum tepidum (strain ATCC 49652 / DSM 12025 / NBRC 103806 / TLS) (Chlorobium tepidum).